The primary structure comprises 157 residues: Regulatory protein RecX (157 aa).

It belongs to the RecX family.

The protein localises to the cytoplasm. Its function is as follows. Modulates RecA activity. The protein is Regulatory protein RecX of Leptothrix cholodnii (strain ATCC 51168 / LMG 8142 / SP-6) (Leptothrix discophora (strain SP-6)).